Here is a 100-residue protein sequence, read N- to C-terminus: Urease subunit gamma (100 aa).

It belongs to the urease gamma subunit family. In terms of assembly, heterotrimer of UreA (gamma), UreB (beta) and UreC (alpha) subunits. Three heterotrimers associate to form the active enzyme.

The protein localises to the cytoplasm. It carries out the reaction urea + 2 H2O + H(+) = hydrogencarbonate + 2 NH4(+). Its pathway is nitrogen metabolism; urea degradation; CO(2) and NH(3) from urea (urease route): step 1/1. This Dinoroseobacter shibae (strain DSM 16493 / NCIMB 14021 / DFL 12) protein is Urease subunit gamma.